The sequence spans 698 residues: DNA ligase (698 aa).

Residues 47–51, 96–97, and glutamate 128 each bind NAD(+); these read DAQYD and SL. The active-site N6-AMP-lysine intermediate is lysine 130. 4 residues coordinate NAD(+): arginine 151, glutamate 186, lysine 303, and lysine 327. Zn(2+) is bound by residues cysteine 422, cysteine 425, cysteine 440, and cysteine 446. The BRCT domain occupies 620 to 698; it reads GDNLLLSNQT…EEEWIKMVNE (79 aa).

Belongs to the NAD-dependent DNA ligase family. LigA subfamily. Mg(2+) serves as cofactor. Mn(2+) is required as a cofactor.

It catalyses the reaction NAD(+) + (deoxyribonucleotide)n-3'-hydroxyl + 5'-phospho-(deoxyribonucleotide)m = (deoxyribonucleotide)n+m + AMP + beta-nicotinamide D-nucleotide.. DNA ligase that catalyzes the formation of phosphodiester linkages between 5'-phosphoryl and 3'-hydroxyl groups in double-stranded DNA using NAD as a coenzyme and as the energy source for the reaction. It is essential for DNA replication and repair of damaged DNA. The polypeptide is DNA ligase (Orientia tsutsugamushi (strain Boryong) (Rickettsia tsutsugamushi)).